Consider the following 99-residue polypeptide: Co-chaperonin GroES (99 aa).

Belongs to the GroES chaperonin family. Heptamer of 7 subunits arranged in a ring. Interacts with the chaperonin GroEL.

The protein localises to the cytoplasm. In terms of biological role, together with the chaperonin GroEL, plays an essential role in assisting protein folding. The GroEL-GroES system forms a nano-cage that allows encapsulation of the non-native substrate proteins and provides a physical environment optimized to promote and accelerate protein folding. GroES binds to the apical surface of the GroEL ring, thereby capping the opening of the GroEL channel. This chain is Co-chaperonin GroES, found in Corynebacterium jeikeium (strain K411).